Consider the following 246-residue polypeptide: 4-hydroxy-tetrahydrodipicolinate reductase (246 aa).

NAD(+) is bound by residues 8 to 13 (GALGRM), D34, 74 to 76 (GTT), and 101 to 104 (APNF). H131 acts as the Proton donor/acceptor in catalysis. Position 132 (H132) interacts with (S)-2,3,4,5-tetrahydrodipicolinate. K135 acts as the Proton donor in catalysis. 141-142 (GT) is a binding site for (S)-2,3,4,5-tetrahydrodipicolinate.

It belongs to the DapB family.

The protein resides in the cytoplasm. The enzyme catalyses (S)-2,3,4,5-tetrahydrodipicolinate + NAD(+) + H2O = (2S,4S)-4-hydroxy-2,3,4,5-tetrahydrodipicolinate + NADH + H(+). It catalyses the reaction (S)-2,3,4,5-tetrahydrodipicolinate + NADP(+) + H2O = (2S,4S)-4-hydroxy-2,3,4,5-tetrahydrodipicolinate + NADPH + H(+). The protein operates within amino-acid biosynthesis; L-lysine biosynthesis via DAP pathway; (S)-tetrahydrodipicolinate from L-aspartate: step 4/4. Its function is as follows. Catalyzes the conversion of 4-hydroxy-tetrahydrodipicolinate (HTPA) to tetrahydrodipicolinate. The chain is 4-hydroxy-tetrahydrodipicolinate reductase from Thermobifida fusca (strain YX).